Consider the following 153-residue polypeptide: 6,7-dimethyl-8-ribityllumazine synthase (153 aa).

Residues Phe22, 56–58 (AFE), and 80–82 (AVI) contribute to the 5-amino-6-(D-ribitylamino)uracil site. (2S)-2-hydroxy-3-oxobutyl phosphate is bound at residue 85-86 (ST). His88 (proton donor) is an active-site residue. Phe113 contacts 5-amino-6-(D-ribitylamino)uracil. Arg127 is a binding site for (2S)-2-hydroxy-3-oxobutyl phosphate.

Belongs to the DMRL synthase family.

The catalysed reaction is (2S)-2-hydroxy-3-oxobutyl phosphate + 5-amino-6-(D-ribitylamino)uracil = 6,7-dimethyl-8-(1-D-ribityl)lumazine + phosphate + 2 H2O + H(+). It participates in cofactor biosynthesis; riboflavin biosynthesis; riboflavin from 2-hydroxy-3-oxobutyl phosphate and 5-amino-6-(D-ribitylamino)uracil: step 1/2. Its function is as follows. Catalyzes the formation of 6,7-dimethyl-8-ribityllumazine by condensation of 5-amino-6-(D-ribitylamino)uracil with 3,4-dihydroxy-2-butanone 4-phosphate. This is the penultimate step in the biosynthesis of riboflavin. In Clostridium novyi (strain NT), this protein is 6,7-dimethyl-8-ribityllumazine synthase.